We begin with the raw amino-acid sequence, 179 residues long: ATP synthase subunit b (179 aa).

Residues 23–43 traverse the membrane as a helical segment; sequence IVVGLVAFGLLAFVLMKFVFP.

The protein belongs to the ATPase B chain family. F-type ATPases have 2 components, F(1) - the catalytic core - and F(0) - the membrane proton channel. F(1) has five subunits: alpha(3), beta(3), gamma(1), delta(1), epsilon(1). F(0) has three main subunits: a(1), b(2) and c(10-14). The alpha and beta chains form an alternating ring which encloses part of the gamma chain. F(1) is attached to F(0) by a central stalk formed by the gamma and epsilon chains, while a peripheral stalk is formed by the delta and b chains.

The protein resides in the cell membrane. Functionally, f(1)F(0) ATP synthase produces ATP from ADP in the presence of a proton or sodium gradient. F-type ATPases consist of two structural domains, F(1) containing the extramembraneous catalytic core and F(0) containing the membrane proton channel, linked together by a central stalk and a peripheral stalk. During catalysis, ATP synthesis in the catalytic domain of F(1) is coupled via a rotary mechanism of the central stalk subunits to proton translocation. Component of the F(0) channel, it forms part of the peripheral stalk, linking F(1) to F(0). This chain is ATP synthase subunit b, found in Salinispora arenicola (strain CNS-205).